A 500-amino-acid polypeptide reads, in one-letter code: MAQSTKQKVVIVGAGPVGSLAALYAAARGDEVEVYELRGDLRDPSTIPLNFTKSINLALSERGINAMRHSNREEMIHKVLEEAIPMHGRMIHGRDDGKLWEAAQAYDVHGRYINAADRSTLNNALLDELERTPNVNLFFNHKLTGADFRANKAWFERRIPGESTSDRVEIQVNFDYLIGADGAHSASRYHMMKYARVDYQQEYIDTLWCEFRIPPTDDGDFRISPNHLHIWPGKEFMFIALPSADKSFTCTLFAPAGHYARLKSSPQNLLESFDTHFPGVCPELITPKDLQEQFETNPHLPLISIKCKPHHFDSSVVIVGDAAHAVLPFYGQGLNAGLEDIRVLFEIMDKHGVYNPDISPEMRTLSRQAAFQAYTDQRIADAHAINDLSKQNYLEMRWGVKLPLYKLRKSIEETLDRYVPSLGWQTQYARVSFSNQRYSEVIKAVRRQGRLLGFGFISAIVSGVAVVGILAWKRPREASVLSVLKSSARQLGDVWRSKFR.

Belongs to the aromatic-ring hydroxylase family. KMO subfamily. FAD serves as cofactor.

The protein localises to the mitochondrion outer membrane. The enzyme catalyses L-kynurenine + NADPH + O2 + H(+) = 3-hydroxy-L-kynurenine + NADP(+) + H2O. The protein operates within cofactor biosynthesis; NAD(+) biosynthesis; quinolinate from L-kynurenine: step 1/3. Its function is as follows. Catalyzes the hydroxylation of L-kynurenine (L-Kyn) to form 3-hydroxy-L-kynurenine (L-3OHKyn). Required for synthesis of quinolinic acid. The chain is Kynurenine 3-monooxygenase (bna4) from Aspergillus terreus (strain NIH 2624 / FGSC A1156).